A 130-amino-acid chain; its full sequence is Ribosome-binding factor A (130 aa).

Positions 111 to 130 (RDLDDVGPGATSSDEDAEQR) are disordered.

This sequence belongs to the RbfA family. In terms of assembly, monomer. Binds 30S ribosomal subunits, but not 50S ribosomal subunits or 70S ribosomes.

Its subcellular location is the cytoplasm. Functionally, one of several proteins that assist in the late maturation steps of the functional core of the 30S ribosomal subunit. Associates with free 30S ribosomal subunits (but not with 30S subunits that are part of 70S ribosomes or polysomes). Required for efficient processing of 16S rRNA. May interact with the 5'-terminal helix region of 16S rRNA. The protein is Ribosome-binding factor A of Xanthomonas oryzae pv. oryzae (strain MAFF 311018).